Here is a 296-residue protein sequence, read N- to C-terminus: Putative mannose 6-phosphate receptor-like protein C530.09c (296 aa).

A signal peptide spans 1–25; it reads MRLLTCLINVLAGLTLFSQFQRAFG. Over 26 to 206 the chain is Lumenal; the sequence is LTITRRGFKV…TVKKDSTLNP (181 aa). The 156-residue stretch at 42–197 folds into the MRH domain; that stretch reads PFCALHHPNT…EWKTIHACPT (156 aa). C44 and C87 are joined by a disulfide. N-linked (GlcNAc...) asparagine glycans are attached at residues N64, N81, N93, N96, and N143. 2 cysteine pairs are disulfide-bonded: C147–C183 and C163–C195. Residues 207 to 227 form a helical membrane-spanning segment; the sequence is VSVFLLFCAIAFLAYFVGGFV. Over 228–249 the chain is Cytoplasmic; sequence YQRVVLNARGLRQIPNYEMWRS. A helical transmembrane segment spans residues 250-270; it reads LFGFISDIVIILYSSILSILP. At 271–296 the chain is on the lumenal side; sequence SSITRMRGNRRNIDYVEDALIDDIDT.

The protein belongs to the MRL1/IGF2R family.

It is found in the golgi apparatus. Its subcellular location is the trans-Golgi network membrane. It localises to the endosome membrane. This chain is Putative mannose 6-phosphate receptor-like protein C530.09c, found in Schizosaccharomyces pombe (strain 972 / ATCC 24843) (Fission yeast).